We begin with the raw amino-acid sequence, 492 residues long: Protein nucleotidyltransferase YdiU (492 aa).

Residues G88, G90, R91, K111, D123, G124, R174, and R181 each coordinate ATP. Catalysis depends on D250, which acts as the Proton acceptor. Residues N251 and D260 each contribute to the Mg(2+) site. An ATP-binding site is contributed by D260.

The protein belongs to the SELO family. It depends on Mg(2+) as a cofactor. Mn(2+) serves as cofactor.

The enzyme catalyses L-seryl-[protein] + ATP = 3-O-(5'-adenylyl)-L-seryl-[protein] + diphosphate. It carries out the reaction L-threonyl-[protein] + ATP = 3-O-(5'-adenylyl)-L-threonyl-[protein] + diphosphate. The catalysed reaction is L-tyrosyl-[protein] + ATP = O-(5'-adenylyl)-L-tyrosyl-[protein] + diphosphate. It catalyses the reaction L-histidyl-[protein] + UTP = N(tele)-(5'-uridylyl)-L-histidyl-[protein] + diphosphate. The enzyme catalyses L-seryl-[protein] + UTP = O-(5'-uridylyl)-L-seryl-[protein] + diphosphate. It carries out the reaction L-tyrosyl-[protein] + UTP = O-(5'-uridylyl)-L-tyrosyl-[protein] + diphosphate. In terms of biological role, nucleotidyltransferase involved in the post-translational modification of proteins. It can catalyze the addition of adenosine monophosphate (AMP) or uridine monophosphate (UMP) to a protein, resulting in modifications known as AMPylation and UMPylation. This Rhodopseudomonas palustris (strain ATCC BAA-98 / CGA009) protein is Protein nucleotidyltransferase YdiU.